The primary structure comprises 479 residues: Muscarinic acetylcholine receptor M4 (479 aa).

The Extracellular segment spans residues 1 to 30 (MANFTPVNGSSANQSVRLVTTAHNHLETVE). 2 N-linked (GlcNAc...) asparagine glycosylation sites follow: asparagine 8 and asparagine 13. A helical membrane pass occupies residues 31 to 53 (MVFIATVTGSLSLVTVVGNILVM). The Cytoplasmic segment spans residues 54-67 (LSIKVNRQLQTVNN). Residues 68–88 (YFLFSLACADLIIGAFSMNLY) traverse the membrane as a helical segment. Topologically, residues 89 to 105 (TLYIIKGYWPLGAVVCD) are extracellular. The cysteines at positions 104 and 184 are disulfide-linked. A helical transmembrane segment spans residues 106-127 (LWLALDYVVSNASVMNLLIISF). Residues 128–147 (DRYFCVTKPLTYPARRTTKM) are Cytoplasmic-facing. The chain crosses the membrane as a helical span at residues 148-170 (AGLMIAAAWVLSFVLWAPAILFW). Residues 171-192 (QFVVGKRTVPDNQCFIQFLSNP) lie on the Extracellular side of the membrane. The chain crosses the membrane as a helical span at residues 193–215 (AVTFGTAIAAFYLPVVIMTVLYI). Over 216–401 (HISLASRSRV…AARERKVTRT (186 aa)) the chain is Cytoplasmic. Residues 271-334 (LEEAPPPALP…APTLQPRTLN (64 aa)) form a disordered region. The segment covering 274–285 (APPPALPPPPRP) has biased composition (pro residues). Positions 293-303 (NESSSGSATQN) are enriched in polar residues. Over residues 310-333 (TELSTTEAATTPALPAPTLQPRTL) the composition is skewed to low complexity. The helical transmembrane segment at 402–422 (IFAILLAFILTWTPYNVMVLV) threads the bilayer. The Extracellular segment spans residues 423–436 (NTFCQSCIPERVWS). The helical transmembrane segment at 437–456 (IGYWLCYVNSTINPACYALC) threads the bilayer. Residues 457 to 479 (NATFKKTFRHLLLCQYRNIGTAR) lie on the Cytoplasmic side of the membrane. Threonine 459, threonine 463, and threonine 477 each carry phosphothreonine.

The protein belongs to the G-protein coupled receptor 1 family. Muscarinic acetylcholine receptor subfamily. CHRM4 sub-subfamily.

The protein resides in the cell membrane. It localises to the postsynaptic cell membrane. Its function is as follows. The muscarinic acetylcholine receptor mediates various cellular responses, including inhibition of adenylate cyclase, breakdown of phosphoinositides and modulation of potassium channels through the action of G proteins. Primary transducing effect is inhibition of adenylate cyclase. The chain is Muscarinic acetylcholine receptor M4 (Chrm4) from Mus musculus (Mouse).